The primary structure comprises 748 residues: Polyribonucleotide nucleotidyltransferase (748 aa).

Residues aspartate 487 and aspartate 493 each coordinate Mg(2+). Residues 554–613 (PSTTTIKIDKDKIRDIIGPGGKVIKEICETSGAKIDISDDGTVSVYASDRDKLKVALDKI) enclose the KH domain. The S1 motif domain occupies 623 to 691 (GEIFNGTVVK…NKGKAKLTIK (69 aa)). The interval 691 to 748 (KNADKDKSSNNTKPKTNVNNTKDNSEPEQRRDSSKKRAWNEDNNAETAEVITERKYFN) is disordered. Residues 699–712 (SNNTKPKTNVNNTK) show a composition bias toward low complexity. Residues 713–722 (DNSEPEQRRD) show a composition bias toward basic and acidic residues.

Belongs to the polyribonucleotide nucleotidyltransferase family. Requires Mg(2+) as cofactor.

It is found in the cytoplasm. The catalysed reaction is RNA(n+1) + phosphate = RNA(n) + a ribonucleoside 5'-diphosphate. In terms of biological role, involved in mRNA degradation. Catalyzes the phosphorolysis of single-stranded polyribonucleotides processively in the 3'- to 5'-direction. The sequence is that of Polyribonucleotide nucleotidyltransferase from Rickettsia africae (strain ESF-5).